Here is a 510-residue protein sequence, read N- to C-terminus: MVNQAFMLWCYITPVLGAVVAEQYIGRVKTIIFSSSVYLCGLVTLFLSSLPTAYAMGISLPGLLVSLFLIGIGTGGIKTNVSSLIAEQYTGPKESRRILKSGEEVIVDRDLTIQRIFTTFFLYINIGSFSPLLITIIEKEYGFSAAFSLSAITFSIGFIIVLVSRHLYISRDPDSSIIFNACKAFWIAIKHKGNLDYARPSYQTEQAATRRLSWDDSFIDDLRRAIASCKIFILYPIYWAAYSQFLTNFISQAATMETHGVPNDIMTNIDPITVLILLPVLDRIVFPFLRRQGVPVRHVDRITIGMPDFQPFVQESYQICQRTCFQIISAIELGLGLQAGRLTQCCQPAASEIRLLYYPPTTKNLFDEGLKKRAWPHTDLGIITLLFQDMVGGLEVEDRAAGKPRSFIPVKRVSPNEMIVNTSDSLQRWTNNVIRAGLHQVTAPDAAKLSNGVDMLPARCSSVFFFKAGRDTSVGPLPEFVTEDRPAAFEDMTALQYQQLKTRILHGVEG.

The next 3 helical transmembrane spans lie at methionine 1–alanine 21, isoleucine 31–proline 51, and glycine 57–isoleucine 77. A glycan (N-linked (GlcNAc...) asparagine) is linked at asparagine 80. The next 4 helical transmembrane spans lie at isoleucine 116–isoleucine 136, phenylalanine 143–valine 163, isoleucine 231–serine 251, and isoleucine 269–leucine 289. The Fe2OG dioxygenase domain occupies proline 348 to alanine 468. Positions 377 and 379 each coordinate Fe cation. Asparagine 421 carries an N-linked (GlcNAc...) asparagine glycan. A Fe cation-binding site is contributed by histidine 439. Arginine 459 contacts 2-oxoglutarate.

This sequence belongs to the major facilitator superfamily. Proton-dependent oligopeptide transporter (POT/PTR) (TC 2.A.17) family.

It is found in the membrane. Its function is as follows. Peptide transporter; part of the gene cluster that mediates the biosynthesis of imizoquins A to D, tripeptide-derived alkaloids that serve a protective role against oxidative stress that are essential for normal germination. This Aspergillus flavus (strain ATCC 200026 / FGSC A1120 / IAM 13836 / NRRL 3357 / JCM 12722 / SRRC 167) protein is Peptide transporter imqJ.